A 220-amino-acid chain; its full sequence is Iron-sulfur cluster repair protein YtfE (220 aa).

It belongs to the RIC family. YtfE subfamily. As to quaternary structure, homodimer.

It is found in the cytoplasm. Di-iron-containing protein involved in the repair of iron-sulfur clusters damaged by oxidative and nitrosative stress conditions. The chain is Iron-sulfur cluster repair protein YtfE from Escherichia coli O6:K15:H31 (strain 536 / UPEC).